We begin with the raw amino-acid sequence, 91 residues long: Movement protein TGBp3 (91 aa).

Over 1 to 23 the chain is Lumenal; it reads MLGTRNIPTTSGLPLPPPSSSLS. Residues 24-46 form a helical membrane-spanning segment; it reads AYIFPTILAIIFAVFALVAIHIT. Topologically, residues 47 to 91 are cytoplasmic; it reads TPEPFCTIHIDGASITITNCPDPAAILNKVAIGPWRGLSYHNNLK.

It belongs to the Tymovirales TGBp3 protein family.

It is found in the host endoplasmic reticulum membrane. In terms of biological role, plays a role in viral cell-to-cell propagation, by facilitating genome transport to neighboring plant cells through plasmosdesmata. May induce the formation of granular vesicles derived from the Endoplasmic reticulum, which align on actin filaments. The polypeptide is Movement protein TGBp3 (Cymbidium mosaic virus (strain Singapore)).